A 686-amino-acid polypeptide reads, in one-letter code: tRNA 5-methylaminomethyl-2-thiouridine biosynthesis bifunctional protein MnmC (686 aa).

Residues 1–258 (MPNIPLRVNS…RRALRRQQLD (258 aa)) are tRNA (mnm(5)s(2)U34)-methyltransferase. Residues 276 to 686 (IGGGVASANL…MRKLIKGKAL (411 aa)) form an FAD-dependent cmnm(5)s(2)U34 oxidoreductase region.

This sequence in the N-terminal section; belongs to the methyltransferase superfamily. tRNA (mnm(5)s(2)U34)-methyltransferase family. It in the C-terminal section; belongs to the DAO family. The cofactor is FAD.

The protein localises to the cytoplasm. The catalysed reaction is 5-aminomethyl-2-thiouridine(34) in tRNA + S-adenosyl-L-methionine = 5-methylaminomethyl-2-thiouridine(34) in tRNA + S-adenosyl-L-homocysteine + H(+). Functionally, catalyzes the last two steps in the biosynthesis of 5-methylaminomethyl-2-thiouridine (mnm(5)s(2)U) at the wobble position (U34) in tRNA. Catalyzes the FAD-dependent demodification of cmnm(5)s(2)U34 to nm(5)s(2)U34, followed by the transfer of a methyl group from S-adenosyl-L-methionine to nm(5)s(2)U34, to form mnm(5)s(2)U34. This is tRNA 5-methylaminomethyl-2-thiouridine biosynthesis bifunctional protein MnmC from Shewanella loihica (strain ATCC BAA-1088 / PV-4).